The chain runs to 120 residues: Small ribosomal subunit protein eS24 (120 aa).

Residues Arg-101–Gly-120 are disordered.

Belongs to the eukaryotic ribosomal protein eS24 family.

In Saccharolobus islandicus (strain M.16.4 / Kamchatka #3) (Sulfolobus islandicus), this protein is Small ribosomal subunit protein eS24.